A 198-amino-acid polypeptide reads, in one-letter code: Small ribosomal subunit protein uS4 (198 aa).

The S4 RNA-binding domain maps to 91–151; the sequence is SRLDNIVYRL…EKSKNLKIVE (61 aa).

The protein belongs to the universal ribosomal protein uS4 family. In terms of assembly, part of the 30S ribosomal subunit. Contacts protein S5. The interaction surface between S4 and S5 is involved in control of translational fidelity.

In terms of biological role, one of the primary rRNA binding proteins, it binds directly to 16S rRNA where it nucleates assembly of the body of the 30S subunit. Functionally, with S5 and S12 plays an important role in translational accuracy. The chain is Small ribosomal subunit protein uS4 from Phytoplasma australiense.